We begin with the raw amino-acid sequence, 431 residues long: Putative transcription factor R429 (431 aa).

Positions 28 to 95 (NKFENMSKAL…SIENCSESLD (68 aa)) form a coiled coil. The segment at 142–187 (SQQENSSESNNDIVKNGTGGSTSKRKKIQPSNRCSGSKTGKVTETK) is disordered. Over residues 143-152 (QQENSSESNN) the composition is skewed to low complexity. Positions 170-181 (QPSNRCSGSKTG) are enriched in polar residues. Residues 218–241 (CSVPDCDGEKILNQNDGYMVCKKC) fold into a zinc finger.

The protein belongs to the nucleo-cytoplasmic large DNA viruses (NCLDVs) VLTF-3 family.

Its function is as follows. Putative transcription factor. This Acanthamoeba polyphaga (Amoeba) protein is Putative transcription factor R429.